Here is a 158-residue protein sequence, read N- to C-terminus: 6,7-dimethyl-8-ribityllumazine synthase (158 aa).

5-amino-6-(D-ribitylamino)uracil-binding positions include Phe-22, 57-59, and 84-86; these read AYE and TVI. 89 to 90 is a binding site for (2S)-2-hydroxy-3-oxobutyl phosphate; the sequence is GT. The active-site Proton donor is the His-92. Phe-117 is a binding site for 5-amino-6-(D-ribitylamino)uracil. Arg-131 contributes to the (2S)-2-hydroxy-3-oxobutyl phosphate binding site.

It belongs to the DMRL synthase family. As to quaternary structure, forms an icosahedral capsid composed of 60 subunits, arranged as a dodecamer of pentamers.

The catalysed reaction is (2S)-2-hydroxy-3-oxobutyl phosphate + 5-amino-6-(D-ribitylamino)uracil = 6,7-dimethyl-8-(1-D-ribityl)lumazine + phosphate + 2 H2O + H(+). It participates in cofactor biosynthesis; riboflavin biosynthesis; riboflavin from 2-hydroxy-3-oxobutyl phosphate and 5-amino-6-(D-ribitylamino)uracil: step 1/2. Catalyzes the formation of 6,7-dimethyl-8-ribityllumazine by condensation of 5-amino-6-(D-ribitylamino)uracil with 3,4-dihydroxy-2-butanone 4-phosphate. This is the penultimate step in the biosynthesis of riboflavin. The chain is 6,7-dimethyl-8-ribityllumazine synthase from Pectobacterium carotovorum subsp. carotovorum (strain PC1).